A 578-amino-acid chain; its full sequence is Arginine--tRNA ligase (578 aa).

Positions 127–137 (PNLAKEMHVGH) match the 'HIGH' region motif.

This sequence belongs to the class-I aminoacyl-tRNA synthetase family. Monomer.

The protein resides in the cytoplasm. The enzyme catalyses tRNA(Arg) + L-arginine + ATP = L-arginyl-tRNA(Arg) + AMP + diphosphate. The polypeptide is Arginine--tRNA ligase (Pseudomonas putida (strain ATCC 47054 / DSM 6125 / CFBP 8728 / NCIMB 11950 / KT2440)).